Here is a 449-residue protein sequence, read N- to C-terminus: tRNA-2-methylthio-N(6)-dimethylallyladenosine synthase (449 aa).

Positions 2-119 (KGLFIRTYGC…LPEMIARASR (118 aa)) constitute an MTTase N-terminal domain. [4Fe-4S] cluster contacts are provided by Cys11, Cys47, Cys82, Cys157, Cys161, and Cys164. In terms of domain architecture, Radical SAM core spans 143 to 378 (EADGPAAFVS…QALLREQQTE (236 aa)). Residues 381–443 (ASQIGKTLPV…LNSLTGELVR (63 aa)) enclose the TRAM domain.

The protein belongs to the methylthiotransferase family. MiaB subfamily. In terms of assembly, monomer. The cofactor is [4Fe-4S] cluster.

It is found in the cytoplasm. The catalysed reaction is N(6)-dimethylallyladenosine(37) in tRNA + (sulfur carrier)-SH + AH2 + 2 S-adenosyl-L-methionine = 2-methylsulfanyl-N(6)-dimethylallyladenosine(37) in tRNA + (sulfur carrier)-H + 5'-deoxyadenosine + L-methionine + A + S-adenosyl-L-homocysteine + 2 H(+). Functionally, catalyzes the methylthiolation of N6-(dimethylallyl)adenosine (i(6)A), leading to the formation of 2-methylthio-N6-(dimethylallyl)adenosine (ms(2)i(6)A) at position 37 in tRNAs that read codons beginning with uridine. The protein is tRNA-2-methylthio-N(6)-dimethylallyladenosine synthase of Hyphomonas neptunium (strain ATCC 15444).